Reading from the N-terminus, the 443-residue chain is MVRKVNIIKGNEGQGKRIKFVQLIFVDINGMPKGMEVPITRLEEAIEEGIAFDGSSVPGFQGIEDSDLVFKADPSTYVEVPWDNVARVYGYIYKDGKPYEADPRGVLRRTLERLEKLGIKVYIGPEPEFYLFKKNGSWELEIPDVGGYFDILTLDKAKDIKREIAEYMPYFGLTPEVLHHEVGKAQHEIDFRHDEALKTADNIVSFKYIVKAVAEMHGLYATFMPKPIYGMPGNGMHLHISLWKDGENIFKGEEGLSETALYFIGGLLKHAKALAAVTNPTVNSYKRLVPGYEAPVYISWGYKNRSALIRVPAFWGNGARIEYRCPDPSANSYLAFAAILMAGLDGIKHKIEPFAYVEENVYEMDEKRREEIGIDMLPENLGEALDELERDKVVKEALGGAYRNFVGYKRKEWEEYLDYLEAKNLPKDTKNVTEWELERYFFI.

The region spanning 16–97 (KRIKFVQLIF…VYGYIYKDGK (82 aa)) is the GS beta-grasp domain. Residues 103–443 (PRGVLRRTLE…EWELERYFFI (341 aa)) enclose the GS catalytic domain. The Mg(2+) site is built by E126 and E128. E176 provides a ligand contact to ATP. The Mg(2+) site is built by E181 and E188. G233 is a binding site for L-glutamate. Position 237 (H237) interacts with Mg(2+). Residues 239-241 (HIS) and S241 contribute to the ATP site. L-glutamate is bound by residues R287, E293, and R305. ATP-binding residues include R305 and R310. Mg(2+) is bound at residue E322. R324 serves as a coordination point for L-glutamate.

This sequence belongs to the glutamine synthetase family. As to quaternary structure, oligomer of 12 subunits arranged in the form of two hexagons. Mg(2+) serves as cofactor.

It localises to the cytoplasm. The enzyme catalyses L-glutamate + NH4(+) + ATP = L-glutamine + ADP + phosphate + H(+). Functionally, probably involved in nitrogen metabolism via ammonium assimilation. Catalyzes the ATP-dependent biosynthesis of glutamine from glutamate and ammonia. In Pyrococcus horikoshii (strain ATCC 700860 / DSM 12428 / JCM 9974 / NBRC 100139 / OT-3), this protein is Glutamine synthetase.